Here is a 1003-residue protein sequence, read N- to C-terminus: Rho-associated protein kinase 1 (1003 aa).

The segment at 1–28 is disordered; sequence VAPVVPDLSSDIDTSNFDDLEEDKGEEE. The AGC-kinase C-terminal domain maps to 1–58; it reads VAPVVPDLSSDIDTSNFDDLEEDKGEEETFPIPKAFVGNQLPFVGFTYYSNRRYLSSA. Acidic residues predominate over residues 16–28; sequence NFDDLEEDKGEEE. An interaction with FHOD1 region spans residues 17 to 376; the sequence is FDDLEEDKGE…KKLKEEREAR (360 aa). A coiled-coil region spans residues 71–341; sequence KSLQESLQKT…RLEQEVNEHK (271 aa). Positions 128 to 205 constitute an REM-1 domain; it reads STVSQIEKEK…LEEANDLLRT (78 aa). Lys-296 bears the N6-acetyllysine mark. The segment at 356–595 is SHROOM3 binding; it reads EAKSVAMCEM…TVSRLEEANS (240 aa). The RhoBD domain occupies 598 to 664; sequence TKDIEILRRE…LAEIMNRKDF (67 aa). The RHOA binding stretch occupies residues 647-659; that stretch reads LKTQAVNKLAEIM. A coiled-coil region spans residues 660–751; it reads NRKDFKIDRK…KLLDLSDSTS (92 aa). A phosphoserine mark is found at Ser-754 and Ser-757. The segment at 764–1003 is auto-inhibitory; the sequence is NLPESRIEGW…VVKNTSGKTR (240 aa). The PH domain maps to 767-966; sequence ESRIEGWLSV…WVTHLVKKIP (200 aa). Residues 877–930 form a Phorbol-ester/DAG-type zinc finger; it reads GHEFIPTLYHFPANCDACAKPLWHVFKPPPALECRRCHVKCHRDHLDKKEDLIC. Residues 968–1003 are disordered; it reads NPPSGFVRASPRTLSTRSTANQSFRKVVKNTSGKTR. Ser-977 carries the post-translational modification Phosphoserine. The span at 979–1003 shows a compositional bias: polar residues; sequence RTLSTRSTANQSFRKVVKNTSGKTR.

Belongs to the protein kinase superfamily. AGC Ser/Thr protein kinase family. Homodimer. Interacts with RHOA (activated by GTP), RHOB, RHOC, GEM, MYLC2B, RHOE, PPP1R12A, LIMK1, LIMK2, TSG101, CHORDC1, DAPK3, PFN1, PTEN and JIP3. Interacts with ITGB1BP1 (via N-terminus and PTB domain). Interacts with FHOD1 in a Src-dependent manner. Interacts with SHROOM3. Mg(2+) is required as a cofactor. Post-translationally, autophosphorylated on serine and threonine residues. In terms of processing, cleaved by caspase-3 during apoptosis. This leads to constitutive activation of the kinase and membrane blebbing.

It localises to the cytoplasm. The protein resides in the cytoskeleton. The protein localises to the microtubule organizing center. It is found in the centrosome. Its subcellular location is the centriole. It localises to the golgi apparatus membrane. The protein resides in the cell projection. The protein localises to the bleb. It is found in the cell membrane. Its subcellular location is the lamellipodium. It localises to the ruffle. The enzyme catalyses L-seryl-[protein] + ATP = O-phospho-L-seryl-[protein] + ADP + H(+). It catalyses the reaction L-threonyl-[protein] + ATP = O-phospho-L-threonyl-[protein] + ADP + H(+). Activated by RHOA binding. Inhibited by Y-27632. In terms of biological role, protein kinase which is a key regulator of actin cytoskeleton and cell polarity. Involved in regulation of smooth muscle contraction, actin cytoskeleton organization, stress fiber and focal adhesion formation, neurite retraction, cell adhesion and motility via phosphorylation of DAPK3, GFAP, LIMK1, LIMK2, MYL9/MLC2, TPPP, PFN1 and PPP1R12A. Phosphorylates FHOD1 and acts synergistically with it to promote SRC-dependent non-apoptotic plasma membrane blebbing. Phosphorylates JIP3 and regulates the recruitment of JNK to JIP3 upon UVB-induced stress. Acts as a suppressor of inflammatory cell migration by regulating PTEN phosphorylation and stability. Acts as a negative regulator of VEGF-induced angiogenic endothelial cell activation. Required for centrosome positioning and centrosome-dependent exit from mitosis. Plays a role in terminal erythroid differentiation. May regulate closure of the eyelids and ventral body wall by inducing the assembly of actomyosin bundles. Promotes keratinocyte terminal differentiation. Involved in osteoblast compaction through the fibronectin fibrillogenesis cell-mediated matrix assembly process, essential for osteoblast mineralization. This Pan troglodytes (Chimpanzee) protein is Rho-associated protein kinase 1 (ROCK1).